Reading from the N-terminus, the 290-residue chain is GTPase Era (290 aa).

The Era-type G domain occupies 2-169 (KSGFVSIIGR…KDKIYANLQE (168 aa)). The segment at 10 to 17 (GRPSTGKS) is G1. GTP is bound at residue 10–17 (GRPSTGKS). Positions 36–40 (QTTRN) are G2. Positions 57–60 (DTPG) are G3. GTP contacts are provided by residues 57 to 61 (DTPGF) and 119 to 122 (NKID). A G4 region spans residues 119 to 122 (NKID). The G5 stretch occupies residues 148–150 (ISA). Positions 200 to 276 (LKEELPYSLY…DLFLQVKLRK (77 aa)) constitute a KH type-2 domain.

It belongs to the TRAFAC class TrmE-Era-EngA-EngB-Septin-like GTPase superfamily. Era GTPase family. Monomer.

Its subcellular location is the cytoplasm. The protein localises to the cell inner membrane. Functionally, an essential GTPase that binds both GDP and GTP, with rapid nucleotide exchange. Plays a role in 16S rRNA processing and 30S ribosomal subunit biogenesis and possibly also in cell cycle regulation and energy metabolism. This chain is GTPase Era, found in Borrelia hermsii (strain HS1 / DAH).